The sequence spans 407 residues: MKDKYDVLVIGAGPAGSIAAKTAAEKGLDVLLIEKRQEIGDPVRCAEGVNKECLKKHVEIDKRWICADLKGSCIFSPDGTKIEMAEEISGGEVGYVLERKVFDRALAEHAATAGAEVRVKTRATGLIIEDDFVKGARLMHLGKEYEVRASIVIGADGVESKVGRWAGIDTALKPVDVETCAQYLIAGADINQEYCEFYIGNEMAPGGYVWVFPKGGGKANVGIGILGSKMGKFKPRPVDYLNDFVQKKFPDARIVEMVFGGVPVSGSIEKTSVNGLMLVGDAARQSDPITGGGILNAMDAGKLAGEAAYEAISAGDVSVVKLEEVYEKKWRDTVGHDIDMSLIVKNCFINLTDDDLDSLAHSLKDVKFERMSLLDLLQALFKANKKLLWDLRVLFKDAAKEVIKNKT.

FAD-binding residues include Ala-15, Glu-34, Cys-45, Ala-46, Gly-48, Arg-99, Ala-123, Asp-281, Gly-293, and Ile-294.

This sequence belongs to the geranylgeranyl reductase family. DGGGPL reductase subfamily. It depends on FAD as a cofactor.

The catalysed reaction is a 2,3-bis-O-phytanyl-sn-glycerol 1-phospholipid + 8 oxidized 2[4Fe-4S]-[ferredoxin] = a 2,3-bis-O-(geranylgeranyl)-sn-glycerol 1-phospholipid + 8 reduced 2[4Fe-4S]-[ferredoxin] + 16 H(+). The enzyme catalyses 2,3-bis-O-(phytanyl)-sn-glycerol 1-phosphate + 8 oxidized 2[4Fe-4S]-[ferredoxin] = 2,3-bis-O-(geranylgeranyl)-sn-glycerol 1-phosphate + 8 reduced 2[4Fe-4S]-[ferredoxin] + 16 H(+). It catalyses the reaction a 2,3-bis-O-phytanyl-sn-glycerol 1-phospholipid + 8 A = a 2,3-bis-O-(geranylgeranyl)-sn-glycerol 1-phospholipid + 8 AH2. It carries out the reaction CDP-2,3-bis-O-(geranylgeranyl)-sn-glycerol + 8 AH2 = CDP-2,3-bis-O-(phytanyl)-sn-glycerol + 8 A. The catalysed reaction is archaetidylserine + 8 AH2 = 2,3-bis-O-phytanyl-sn-glycero-3-phospho-L-serine + 8 A. Its pathway is membrane lipid metabolism; glycerophospholipid metabolism. Is involved in the reduction of 2,3-digeranylgeranylglycerophospholipids (unsaturated archaeols) into 2,3-diphytanylglycerophospholipids (saturated archaeols) in the biosynthesis of archaeal membrane lipids. Catalyzes the formation of archaetidic acid (2,3-di-O-phytanyl-sn-glyceryl phosphate) from 2,3-di-O-geranylgeranylglyceryl phosphate (DGGGP) via the hydrogenation of each double bond of the isoprenoid chains. Is also probably able to reduce double bonds of geranyl groups in CDP-2,3-bis-O-(geranylgeranyl)-sn-glycerol and archaetidylserine, thus acting at various stages in the biosynthesis of archaeal membrane lipids. This is Digeranylgeranylglycerophospholipid reductase from Methanosarcina mazei (strain ATCC BAA-159 / DSM 3647 / Goe1 / Go1 / JCM 11833 / OCM 88) (Methanosarcina frisia).